Consider the following 186-residue polypeptide: Der GTPase-activating protein YihI (186 aa).

A disordered region spans residues 1-65 (MARTKKTRRI…AGSRHSAVDT (65 aa)). 2 stretches are compositionally biased toward basic and acidic residues: residues 9-25 (RITD…RPEN) and 34-45 (TRYELDAKSREE).

This sequence belongs to the YihI family. In terms of assembly, interacts with Der.

A GTPase-activating protein (GAP) that modifies Der/EngA GTPase function. May play a role in ribosome biogenesis. The protein is Der GTPase-activating protein YihI of Histophilus somni (strain 129Pt) (Haemophilus somnus).